The primary structure comprises 337 residues: Glyceraldehyde-3-phosphate dehydrogenase 2 (337 aa).

NAD(+)-binding positions include 11 to 12, Asp35, Arg79, and Thr121; that span reads RI. Residues 153 to 155, Thr184, Arg199, 212 to 213, and Arg235 contribute to the D-glyceraldehyde 3-phosphate site; these read SCT and TG. Cys154 acts as the Nucleophile in catalysis. Asn317 serves as a coordination point for NAD(+).

Belongs to the glyceraldehyde-3-phosphate dehydrogenase family. Homotetramer.

The protein localises to the cytoplasm. The enzyme catalyses D-glyceraldehyde 3-phosphate + phosphate + NADP(+) = (2R)-3-phospho-glyceroyl phosphate + NADPH + H(+). It catalyses the reaction D-glyceraldehyde 3-phosphate + phosphate + NAD(+) = (2R)-3-phospho-glyceroyl phosphate + NADH + H(+). The protein operates within carbohydrate degradation; glycolysis; pyruvate from D-glyceraldehyde 3-phosphate: step 1/5. In terms of biological role, involved in photosynthetic carbon assimilation. Catalyzes the NAD(P)-dependent oxidative phosphorylation of glyceraldehyde 3-phosphate (G3P) to 1,3-bisphosphoglycerate (BPG). The first reaction step involves the formation of a hemiacetal intermediate between G3P and a cysteine residue, and this hemiacetal intermediate is then oxidized to a thioester, with concomitant reduction of NAD to NADH. The reduced NADH is then exchanged with the second NAD, and the thioester is attacked by a nucleophilic inorganic phosphate to produce BPG. It can use both NADP and NAD. In Synechocystis sp. (strain ATCC 27184 / PCC 6803 / Kazusa), this protein is Glyceraldehyde-3-phosphate dehydrogenase 2 (gap2).